A 303-amino-acid chain; its full sequence is ATP synthase gamma chain (303 aa).

It belongs to the ATPase gamma chain family. In terms of assembly, F-type ATPases have 2 components, CF(1) - the catalytic core - and CF(0) - the membrane proton channel. CF(1) has five subunits: alpha(3), beta(3), gamma(1), delta(1), epsilon(1). CF(0) has three main subunits: a, b and c.

The protein resides in the cell membrane. Functionally, produces ATP from ADP in the presence of a proton gradient across the membrane. The gamma chain is believed to be important in regulating ATPase activity and the flow of protons through the CF(0) complex. In Nocardioides sp. (strain ATCC BAA-499 / JS614), this protein is ATP synthase gamma chain.